Consider the following 629-residue polypeptide: EF-hand calcium-binding domain-containing protein 7 (629 aa).

Positions 1–25 are disordered; it reads MAISPRSDATFSSQKSTPSESPRTK. Over residues 7–21 the composition is skewed to polar residues; the sequence is SDATFSSQKSTPSES. 2 EF-hand domains span residues 102–137 and 138–173; these read TSKA…RGEK and MTRE…TNEQ. The interval 195 to 229 is disordered; that stretch reads NHIEGSPERDPSPVPKPSPKITRKTDPETFLNKGD. A phosphoserine mark is found at Ser-200 and Ser-212. Positions 403–438 constitute an EF-hand 3 domain; the sequence is EFKSTLSDIFEVIDLDGNGLLSLEEYNFFELRTSGE. Residues Asp-416, Asp-418, Asn-420, and Glu-427 each coordinate Ca(2+).

Component of the EvC complex composed of EFCAB7, IQCE, EVC2 and EVC; built from two subcomplexes, EVC2:EVC and EFCAB7:IQCE. Interacts (via EF-hand 1 and 2) with IQCE (via N-terminus); this interaction anchors the EVC-EVC2 complex in a signaling microdomain at the base of cilia and stimulates the Hedgehog (Hh) pathway. Interacts with EVC2 (via N-terminal end). Interacts with EVC.

The protein localises to the cell projection. Its subcellular location is the cilium membrane. In terms of biological role, component of the EvC complex that positively regulates ciliary Hedgehog (Hh) signaling. Required for the localization of the EVC2:EVC subcomplex at the base of primary cilia. This is EF-hand calcium-binding domain-containing protein 7 (EFCAB7) from Homo sapiens (Human).